The primary structure comprises 87 residues: UPF0250 protein ECA1299 (87 aa).

Belongs to the UPF0250 family.

The protein is UPF0250 protein ECA1299 of Pectobacterium atrosepticum (strain SCRI 1043 / ATCC BAA-672) (Erwinia carotovora subsp. atroseptica).